The primary structure comprises 509 residues: MEEIQRYLQPDRSQQHNFLYPLIFQEYIYALAHDHGLNRNRSILLENPSYNNKFSLLIVKRLITRMYQQNHFLISTNDSNKNSFLGCNKSLYSQMISEGFAFIVEIPFSLRLISSLSSFEGKKIFKSHNLRSIHSTFPFLEDNFSHLNYVLDILIPYPVHLEILVQTLRYWVKDASSLHLLRFFLHEYWNLNSLITSKKPGYSFSKKNQRFFFFLYNSYVYECESTFVFLRNQSSHLRSTSFGALLERIYFYGKIERLVEVFAKDFQVTLWLFKDPFMHYVRYQGKSILASKGTFLLMNKWKFYLVNFWQCHFYLCFPTGRIHINQLSNHSRDFMGYLSSVRLNPSMLRSQMLENSFLINNAIKKFDTLVPIIPLIGSLAKANFCTVLGHPISKPVWSDLSDSDIIDRFGRICRNLFHYYSGSSKKKTLYRIKYILRLSCARTLARKHKSTVRTFLKRSGSELLEEFLTSEEQVLSLTFPRASSSLWGVYRSRIWYLDIFCIHDLANYQ.

The protein belongs to the intron maturase 2 family. MatK subfamily.

Its subcellular location is the plastid. The protein localises to the chloroplast. Its function is as follows. Usually encoded in the trnK tRNA gene intron. Probably assists in splicing its own and other chloroplast group II introns. This chain is Maturase K, found in Nicotiana glutinosa (Tobacco).